Here is a 520-residue protein sequence, read N- to C-terminus: Cyclic GMP-AMP synthase-like receptor (520 aa).

Residues Ser68 and 80-82 (EFD) each bind ATP. Mg(2+) contacts are provided by Glu80, Asp82, and Asp198. Asp198 contributes to the GTP binding site. Lys264 is a binding site for ATP. 2 residues coordinate Mn(2+): Leu288 and Asp294.

This sequence belongs to the mab-21 family. Mg(2+) is required as a cofactor. It depends on Mn(2+) as a cofactor.

The enzyme catalyses GTP + ATP = 2',3'-cGAMP + 2 diphosphate. It carries out the reaction GTP + ATP = pppGp(2'-5')A + diphosphate. It catalyses the reaction pppGp(2'-5')A = 2',3'-cGAMP + diphosphate. In terms of biological role, nucleotidyltransferase that catalyzes the formation of cyclic GMP-AMP (2',3'-cGAMP) from ATP and GTP and plays a key role in innate immunity. Acts as a key sensor of double-stranded RNA (dsRNA), the presence of dsRNA in the cytoplasm being a danger signal that triggers the immune responses. Directly binds dsRNA, activating the nucleotidyltransferase activity, leading to synthesis of 2',3'-cGAMP, a second messenger that binds to and activates Sting, thereby triggering the immune response via activation of the NF-kappa-B transcription factor. This Microplitis demolitor (Parasitoid wasp) protein is Cyclic GMP-AMP synthase-like receptor.